Reading from the N-terminus, the 299-residue chain is EDCFTIWLDLNIFLSLGVDCWIDNTRVIYNRSSGYMSNAPGVQIRVPGFGKTYSIEYLDDNKLAGYMHTLVQNLVNNAYVRDETVRAPPYDWRLEPRHQEEYYLKLAGLVEEMYATYGKPVFLIGHSLGFCHLLYFLLLQPQGIPIMSSIKLVEEQRITTTSPWMFPSHQVWPEDHVFISTPNFNYTFSDFQRFFADLHFEDGWYMWLQSRDLLAGLPAPGVEVYCLYGVGLPTPHTYMYDHGFPYTDPVGIIYEDGDDTVTTHSIELCSHWQGRQPQPVHLLPLRGTQHLNMVFSNKT.

Asn-30 is a glycosylation site (N-linked (GlcNAc...) asparagine). Ser-127 acts as the Nucleophile in catalysis. The N-linked (GlcNAc...) asparagine glycan is linked to Asn-185. Cys-226 and Cys-269 are oxidised to a cystine. Residues Asp-258 and His-290 each act as charge relay system in the active site.

Belongs to the AB hydrolase superfamily. Lipase family.

The protein localises to the secreted. It carries out the reaction a sterol + a 1,2-diacyl-sn-glycero-3-phosphocholine = a sterol ester + a 1-acyl-sn-glycero-3-phosphocholine. Its activity is regulated as follows. APOA1 is the most potent activator in plasma. Also activated by APOE, APOC1 and APOA4. Central enzyme in the extracellular metabolism of plasma lipoproteins. Synthesized mainly in the liver and secreted into plasma where it converts cholesterol and phosphatidylcholines (lecithins) to cholesteryl esters and lysophosphatidylcholines on the surface of high and low density lipoproteins (HDLs and LDLs). The cholesterol ester is then transported back to the liver. Has a preference for plasma 16:0-18:2 or 18:O-18:2 phosphatidylcholines. Also produced in the brain by primary astrocytes, and esterifies free cholesterol on nascent APOE-containing lipoproteins secreted from glia and influences cerebral spinal fluid (CSF) APOE- and APOA1 levels. Together with APOE and the cholesterol transporter ABCA1, plays a key role in the maturation of glial-derived, nascent lipoproteins. Required for remodeling high-density lipoprotein particles into their spherical forms. This chain is Phosphatidylcholine-sterol acyltransferase (LCAT), found in Eliomys quercinus (Garden dormouse).